The primary structure comprises 413 residues: Methylaspartate ammonia-lyase (413 aa).

Gln-172 is a binding site for (2S,3S)-3-methyl-L-aspartate. The Mg(2+) site is built by Asp-238, Glu-273, and Asp-307. Residue Gln-329 participates in (2S,3S)-3-methyl-L-aspartate binding. Residue Lys-331 is the Proton acceptor of the active site. 360–361 (TC) contributes to the (2S,3S)-3-methyl-L-aspartate binding site.

Belongs to the methylaspartate ammonia-lyase family. Homodimer. Mg(2+) is required as a cofactor.

The enzyme catalyses (2S,3S)-3-methyl-L-aspartate = mesaconate + NH4(+). It functions in the pathway amino-acid degradation; L-glutamate degradation via mesaconate pathway; acetate and pyruvate from L-glutamate: step 2/4. Its function is as follows. Involved in the methylaspartate cycle. Catalyzes the formation of the alpha,beta-unsaturated bond by the reversible anti elimination of ammonia from L-threo-beta-methylaspartate (L-threo-(2S,3S)-3-methylaspartate) to give mesaconate. The protein is Methylaspartate ammonia-lyase of Citrobacter amalonaticus.